The chain runs to 210 residues: UPF0301 protein Mnod_6933 (210 aa).

Belongs to the UPF0301 (AlgH) family.

The polypeptide is UPF0301 protein Mnod_6933 (Methylobacterium nodulans (strain LMG 21967 / CNCM I-2342 / ORS 2060)).